The sequence spans 78 residues: Large ribosomal subunit protein eL20 (78 aa).

Belongs to the eukaryotic ribosomal protein eL20 family. In terms of assembly, part of the 50S ribosomal subunit. Binds 23S rRNA.

The polypeptide is Large ribosomal subunit protein eL20 (Thermococcus sibiricus (strain DSM 12597 / MM 739)).